The sequence spans 162 residues: Ubiquitin-fold modifier-conjugating enzyme 1 (162 aa).

The active-site Glycyl thioester intermediate is Cys-115.

Belongs to the ubiquitin-conjugating enzyme family. UFC1 subfamily. In terms of assembly, interacts with uba-5.

E2-like enzyme which forms an intermediate with ufm-1. The intermediate is formed via a thioester linkage. The sequence is that of Ubiquitin-fold modifier-conjugating enzyme 1 from Caenorhabditis briggsae.